The sequence spans 129 residues: Follitropin subunit beta (129 aa).

The first 20 residues, 1-20 (MKSLQFCFLFCCWKAICCNS), serve as a signal peptide directing secretion. 6 cysteine pairs are disulfide-bonded: Cys21/Cys69, Cys35/Cys84, Cys38/Cys122, Cys46/Cys100, Cys50/Cys102, and Cys105/Cys112. N-linked (GlcNAc...) asparagine glycans are attached at residues Asn25 and Asn42.

Belongs to the glycoprotein hormones subunit beta family. As to quaternary structure, heterodimer. The active follitropin is a heterodimer composed of an alpha chain/CGA shared with other hormones and a unique beta chain/FSHB shown here.

It is found in the secreted. Together with the alpha chain CGA constitutes follitropin, the follicle-stimulating hormone, and provides its biological specificity to the hormone heterodimer. Binds FSHR, a G protein-coupled receptor, on target cells to activate downstream signaling pathways. Follitropin is involved in follicle development and spermatogenesis in reproductive organs. This is Follitropin subunit beta (FSHB) from Sus scrofa (Pig).